The chain runs to 129 residues: Protein UL131A (129 aa).

A signal peptide spans 1–18; it reads MRLCRVWLSVCLCAVVLG.

In terms of assembly, forms the envelope pentamer complex (PC) composed of gH, gL, UL128, UL130, and UL131A. The pentamer interacts with host NRP2. The interaction with gH is important for the formation of UL128, UL130, gH-gL complex.

It is found in the virion membrane. In terms of biological role, plays a role in viral entry into host cells. Forms a pentameric complex at the surface of the viral envelope together with gH, gL, UL130 and UL131. This complex is required for entry in epithelial, endothelial and myeloid host cells. Mechanistically, engages host receptor(s) including neurophilin 2/NRP2 to mediate infection. Contributes to the formation of the complex between UL128, UL130 and gH-gL. The polypeptide is Protein UL131A (UL131A) (Human cytomegalovirus (strain Merlin) (HHV-5)).